The following is an 893-amino-acid chain: DNA mismatch repair protein MutS (893 aa).

ATP is bound at residue 638 to 645; that stretch reads GPNMAGKS.

Belongs to the DNA mismatch repair MutS family.

Its function is as follows. This protein is involved in the repair of mismatches in DNA. It is possible that it carries out the mismatch recognition step. This protein has a weak ATPase activity. The protein is DNA mismatch repair protein MutS of Lawsonia intracellularis (strain PHE/MN1-00).